Here is a 464-residue protein sequence, read N- to C-terminus: tRNA-2-methylthio-N(6)-dimethylallyladenosine synthase (464 aa).

The interval 1–24 (MSDLVPLSRKPAPAAGGPAPSPAA) is disordered. Positions 8-18 (SRKPAPAAGGP) are enriched in low complexity. Residues 27-142 (RKVYVHTFGC…LPEMVERARD (116 aa)) enclose the MTTase N-terminal domain. [4Fe-4S] cluster is bound by residues Cys36, Cys72, Cys105, Cys180, Cys184, and Cys187. Residues 166–398 (ARGRVTAFVT…LAAQRRIAGE (233 aa)) form the Radical SAM core domain. A TRAM domain is found at 401–464 (AGELGKVVEV…GGSSLSGTLA (64 aa)).

The protein belongs to the methylthiotransferase family. MiaB subfamily. As to quaternary structure, monomer. It depends on [4Fe-4S] cluster as a cofactor.

The protein resides in the cytoplasm. The catalysed reaction is N(6)-dimethylallyladenosine(37) in tRNA + (sulfur carrier)-SH + AH2 + 2 S-adenosyl-L-methionine = 2-methylsulfanyl-N(6)-dimethylallyladenosine(37) in tRNA + (sulfur carrier)-H + 5'-deoxyadenosine + L-methionine + A + S-adenosyl-L-homocysteine + 2 H(+). Functionally, catalyzes the methylthiolation of N6-(dimethylallyl)adenosine (i(6)A), leading to the formation of 2-methylthio-N6-(dimethylallyl)adenosine (ms(2)i(6)A) at position 37 in tRNAs that read codons beginning with uridine. The sequence is that of tRNA-2-methylthio-N(6)-dimethylallyladenosine synthase from Anaeromyxobacter sp. (strain K).